Consider the following 1381-residue polypeptide: MLNRENKTAITRKGMVSNRLNKFSIRKYTVGTASILVGTTLIFGLGNQEAKAAESTNKELNEATTSASDNQSSDKVDMQQLNQEDNTKNDNQKEMVSSQGNETTSNGNKLIEKESVQSTTGNKVEVSTAKSDEQASPKSTNEDLNTKQTISNQEALQPDLQENKSVVNVQPTNEENKKVDAKTESTTLNVKSDAIKSNDETLVDNNSNSNNENNADIILPKSTAPKRLNTRMRIAAVQPSSTEAKNVNDLITSNTTLTVVDADKNNKIVPAQDYLSLKSQITVDDKVKSGDYFTIKYSDTVQVYGLNPEDIKNIGDIKDPNNGETIATAKHDTANNLITYTFTDYVDRFNSVQMGINYSIYMDADTIPVSKNDVEFNVTIGNTTTKTTANIQYPDYVVNEKNSIGSAFTETVSHVGNKENPGYYKQTIYVNPSENSLTNAKLKVQAYHSSYPNNIGQINKDVTDIKIYQVPKGYTLNKGYDVNTKELTDVTNQYLQKITYGDNNSAVIDFGNADSAYVVMVNTKFQYTNSESPTLVQMATLSSTGNKSVSTGNALGFTNNQSGGAGQEVYKIGNYVWEDTNKNGVQELGEKGVGNVTVTVFDNNTNTKVGEAVTKEDGSYLIPNLPNGDYRVEFSNLPKGYEVTPSKQGNNEELDSNGLSSVITVNGKDNLSADLGIYKPKYNLGDYVWEDTNKNGIQDQDEKGISGVTVTLKDENGNVLKTVTTDADGKYKFTDLDNGNYKVEFTTPEGYTPTTVTSGSDIEKDSNGLTTTGVINGADNMTLDSGFYKTPKYNLGNYVWEDTNKDGKQDSTEKGISGVTVTLKNENGEVLQTTKTDKDGKYQFTGLENGTYKVEFETPSGYTPTQVGSGTDEGIDSNGTSTTGVIKDKDNDTIDSGFYKPTYNLGDYVWEDTNKNGVQDKDEKGISGVTVTLKDENDKVLKTVTTDENGKYQFTDLNNGTYKVEFETPSGYTPTSVTSGNDTEKDSNGLTTTGVIKDADNMTLDSGFYKTPKYSLGDYVWYDSNKDGKQDSTEKGIKDVKVTLLNEKGEVIGTTKTDENGKYCFDNLDSGKYKVIFEKPAGLTQTGTNTTEDDKDADGGEVDVTITDHDDFTLDNGYYEEETSDSDSDSDSDSDSDRDSDSDSDSDSDSDSDSDSDSDSDSDSDSDRDSDSDSDSDSDSDSDSDSDSDSDSDSDSDSDSDSDSDSDSDSDSDSDSDSDSDSDSDSDSDSDSDSDSDSDSDSDSDSDSDSDSDSDSDSDSDSDSDSDSDSDSDSDSDSDSDSDSDSDSDSDSDSDSDSDSDSDSDSDSDSDSDSDSDSDSDAGKHTPVKPMSTTKDHHNKAKALPETGNENSGSNNATLFGGLFAALGSLLLFGRRKKQNK.

Residues 1-35 form the signal peptide; that stretch reads MLNRENKTAITRKGMVSNRLNKFSIRKYTVGTASI. Positions 23–34 match the YSIRK-G/S signaling motif motif; that stretch reads FSIRKYTVGTAS. Positions 36–568 are ligand binding A region; sequence LVGTTLIFGL…NNQSGGAGQE (533 aa). Positions 54 to 185 are disordered; the sequence is ESTNKELNEA…NKKVDAKTES (132 aa). Polar residues-rich tracts occupy residues 62-71 and 94-108; these read EATTSASDNQ and EMVSSQGNETTSNGN. A compositionally biased stretch (basic and acidic residues) spans 130–145; the sequence is KSDEQASPKSTNEDLN. Composition is skewed to polar residues over residues 146–155 and 163–173; these read TKQTISNQEA and NKSVVNVQPTN. Over residues 174–183 the composition is skewed to basic and acidic residues; sequence EENKKVDAKT. CNA-B domains lie at 569–680, 681–791, 792–901, 902–1012, and 1013–1123; these read VYKI…IYKP, KYNL…YKTP, KYNL…FYKP, TYNL…YKTP, and KYSL…EEET. Disordered stretches follow at residues 857 to 883, 972 to 992, and 1078 to 1357; these read ETPSGYTPTQVGSGTDEGIDSNGTSTT, YTPTSVTSGNDTEKDSNGLTT, and EKPA…SNNA. Composition is skewed to polar residues over residues 860–869 and 972–981; these read SGYTPTQVGS and YTPTSVTSGN. Composition is skewed to acidic residues over residues 1091-1101, 1118-1134, 1142-1164, and 1172-1320; these read TEDDKDADGGE, YYEEETSDSDSDSDSDS, SDSDSDSDSDSDSDSDSDSDSDS, and SDSD…DSDS. Positions 1344–1348 match the LPXTG sorting signal motif; that stretch reads LPETG. The residue at position 1347 (threonine 1347) is a Pentaglycyl murein peptidoglycan amidated threonine. A propeptide spans 1348-1381 (removed by sortase); it reads GNENSGSNNATLFGGLFAALGSLLLFGRRKKQNK.

The protein belongs to the serine-aspartate repeat-containing protein (SDr) family. As to quaternary structure, interacts with host DSG1; this interaction increases S.aureus adherence to keratinocytes.

Its subcellular location is the secreted. It is found in the cell wall. Functionally, cell surface-associated calcium-binding protein which plays an important role in adhesion and pathogenesis. Mediates interactions with components of the extracellular matrix such as host DSG1 to promote bacterial adhesion to host cells. Contributes to the resistance to killing by innate immune components such as neutrophils present in blood and thus attenuates bacterial clearance. This Staphylococcus aureus (strain USA300) protein is Serine-aspartate repeat-containing protein D (sdrD).